The sequence spans 218 residues: UPF0319 protein PM0395 (218 aa).

The N-terminal stretch at 1–21 (MKFRFAALASVALLTSTVSVA) is a signal peptide.

It belongs to the UPF0319 family.

This Pasteurella multocida (strain Pm70) protein is UPF0319 protein PM0395.